A 157-amino-acid chain; its full sequence is Protein Smg homolog (157 aa).

This sequence belongs to the Smg family.

The sequence is that of Protein Smg homolog from Aeromonas hydrophila subsp. hydrophila (strain ATCC 7966 / DSM 30187 / BCRC 13018 / CCUG 14551 / JCM 1027 / KCTC 2358 / NCIMB 9240 / NCTC 8049).